A 426-amino-acid polypeptide reads, in one-letter code: Serine--tRNA ligase (426 aa).

233-235 contributes to the L-serine binding site; that stretch reads TSE. 264 to 266 serves as a coordination point for ATP; that stretch reads RSE. E287 lines the L-serine pocket. An ATP-binding site is contributed by 351-354; sequence EISS. S387 is a binding site for L-serine.

The protein belongs to the class-II aminoacyl-tRNA synthetase family. Type-1 seryl-tRNA synthetase subfamily. As to quaternary structure, homodimer. The tRNA molecule binds across the dimer.

It localises to the cytoplasm. It catalyses the reaction tRNA(Ser) + L-serine + ATP = L-seryl-tRNA(Ser) + AMP + diphosphate + H(+). It carries out the reaction tRNA(Sec) + L-serine + ATP = L-seryl-tRNA(Sec) + AMP + diphosphate + H(+). It participates in aminoacyl-tRNA biosynthesis; selenocysteinyl-tRNA(Sec) biosynthesis; L-seryl-tRNA(Sec) from L-serine and tRNA(Sec): step 1/1. Catalyzes the attachment of serine to tRNA(Ser). Is also able to aminoacylate tRNA(Sec) with serine, to form the misacylated tRNA L-seryl-tRNA(Sec), which will be further converted into selenocysteinyl-tRNA(Sec). In Xylella fastidiosa (strain M23), this protein is Serine--tRNA ligase.